A 239-amino-acid polypeptide reads, in one-letter code: Myogenic factor 6 (239 aa).

The interval 27 to 64 (QHLDMPGVSPLYDGNHSPLSPGPDNVPSETGGESSGDE) is disordered. Residues 96–147 (DRRKAATLRERRRLKKINEAFDALKRKSVANPNQRLPKVEILRSAISYIERL) form the bHLH domain. Residues 155–184 (DEQERGQSGASDTRNDKEQNRPSGGDYCWK) form a disordered region.

Efficient DNA binding requires dimerization with another bHLH protein.

Its subcellular location is the nucleus. Its function is as follows. Involved in muscle differentiation (myogenic factor). Induces fibroblasts to differentiate into myoblasts. Probable sequence specific DNA-binding protein. This is Myogenic factor 6 (myf6) from Tetraodon nigroviridis (Spotted green pufferfish).